The following is a 629-amino-acid chain: Keratin, type II cytoskeletal 3 (629 aa).

The tract at residues M1 to Q182 is head. S13 and S62 each carry phosphoserine. The tract at residues E183–L218 is coil 1A. One can recognise an IF rod domain in the interval E183–M498. A linker 1 region spans residues Q219–R239. The tract at residues I240–M331 is coil 1B. The residue at position 281 (K281) is an N6,N6-dimethyllysine. The interval Q332–I355 is linker 12. The residue at position 349 (S349) is a Phosphoserine. A coil 2 region spans residues I356–E494. The tail stretch occupies residues E495–R629. A disordered region spans residues S603–R629. Residues V618–R629 are compositionally biased toward polar residues.

It belongs to the intermediate filament family. Heterotetramer of two type I and two type II keratins. Keratin-3 associates with keratin-12. As to expression, cornea specific. Expressed in the basal cells of corneal epithelium and stroma. Also expressed in esophageal epithelium.

This is Keratin, type II cytoskeletal 3 (KRT3) from Oryctolagus cuniculus (Rabbit).